Here is a 206-residue protein sequence, read N- to C-terminus: Triafestin-1 (206 aa).

The signal sequence occupies residues 1-18; it reads MKTILAVIFFGILAFAFA. Residue Asn55 is glycosylated (N-linked (GlcNAc...) asparagine).

This sequence belongs to the calycin superfamily. Triabin family. In terms of assembly, interacts with host coagulation factor XII (F12) (inactive and activated) (via amino acids 1-77). Interacts with host high molecular weight kininogen (KNG1) (via amino acids 402-532). Salivary gland (at protein level).

The protein localises to the secreted. Zn(2+) modulates binding to host coagulation factor XII (F12) and high molecular weight kininogen (KNG1). Its function is as follows. Suppresses activation of the host plasma kallikrein-kinin system, leading to inhibition of the intrinsic coagulation pathway. Blocks host coagulation factor XII (F12) and prekallikrein (KLKB1) reciprocal activation without affecting their amidolytic activities. Blocks binding of host F12 and high molecular weight kininogen (KNG1) to negatively charged surfaces. Attenuates generation of bradykinin by interfering with activation of host kallikrein-kinin system. The chain is Triafestin-1 from Triatoma infestans (Assassin bug).